Reading from the N-terminus, the 414-residue chain is WD repeat-containing protein jip5 (414 aa).

WD repeat units lie at residues 9-48 (PLSA…SDTD), 73-112 (RHKG…VENK), 118-159 (AKDG…SPVS), 222-263 (VSSV…DQDE), and 319-356 (DETE…DGMD). Residues 39-65 (RLPSEESDTDGDGAESTSSSRNGKGHI) are disordered. The disordered stretch occupies residues 352-414 (SDGMDGDMAG…QDIMGFADID (63 aa)). Positions 369–383 (DSDDSDDGDDSDDSD) are enriched in acidic residues.

Belongs to the WD repeat WDR55 family.

It is found in the nucleus. Its subcellular location is the nucleolus. In Neosartorya fischeri (strain ATCC 1020 / DSM 3700 / CBS 544.65 / FGSC A1164 / JCM 1740 / NRRL 181 / WB 181) (Aspergillus fischerianus), this protein is WD repeat-containing protein jip5 (jip5).